The chain runs to 372 residues: DNA double-strand break repair protein Mre11 (372 aa).

Residues aspartate 8, histidine 10, aspartate 49, and asparagine 84 each contribute to the Mn(2+) site. Histidine 85 serves as the catalytic Proton donor. Histidine 161, histidine 190, and histidine 192 together coordinate Mn(2+).

This sequence belongs to the MRE11/RAD32 family. As to quaternary structure, homodimer. Forms a heterotetramer composed of two Mre11 subunits and two Rad50 subunits. It depends on Mn(2+) as a cofactor.

With respect to regulation, nuclease activity is regulated by Rad50. In terms of biological role, part of the Rad50/Mre11 complex, which is involved in the early steps of DNA double-strand break (DSB) repair. The complex may facilitate opening of the processed DNA ends to aid in the recruitment of HerA and NurA. Mre11 binds to DSB ends and has both double-stranded 3'-5' exonuclease activity and single-stranded endonuclease activity. In Methanococcus maripaludis (strain DSM 14266 / JCM 13030 / NBRC 101832 / S2 / LL), this protein is DNA double-strand break repair protein Mre11.